A 147-amino-acid chain; its full sequence is Large ribosomal subunit protein uL16 (147 aa).

Residues 1–16 (MLMPKRVKRRRVHRGR) show a composition bias toward basic residues. The tract at residues 1–20 (MLMPKRVKRRRVHRGRMTGQ) is disordered.

The protein belongs to the universal ribosomal protein uL16 family. Part of the 50S ribosomal subunit.

Functionally, binds 23S rRNA and is also seen to make contacts with the A and possibly P site tRNAs. The chain is Large ribosomal subunit protein uL16 from Alkaliphilus metalliredigens (strain QYMF).